Here is a 156-residue protein sequence, read N- to C-terminus: Translationally controlled tumor protein 2 (156 aa).

The TCTP domain occupies 1–156 (MLVYQDILTG…LAYGLKEIKC (156 aa)).

Belongs to the TCTP family. In terms of tissue distribution, expressed in stems, cauline leaves, minor veins of rosette leaves, roots, lateral root primordia, vascular tissues of petioles and inflorescences, base of siliques, papillae and ovules. Not detected in root meristems, anthers or seeds. Expressed in stomata, trichomes and root cortex.

The protein resides in the nucleus. It is found in the cytoplasm. Functionally, regulates proliferation. Induces whole plant regeneration when expressed in heterologous systems. Involved in root growth and lateral root development, with a probable role in cell reprogramming. The long-distance transport of TCTP RNA and/or protein in plants may have an important role in regulation of growth and development. The sequence is that of Translationally controlled tumor protein 2 from Arabidopsis thaliana (Mouse-ear cress).